We begin with the raw amino-acid sequence, 511 residues long: Apolipoprotein N-acyltransferase (511 aa).

6 helical membrane-spanning segments follow: residues 7-29, 58-78, 90-110, 125-145, 163-183, and 192-212; these read PGWP…LAPF, GWWY…VSIH, LLML…AWLW, LAFA…LTGF, VPVG…ALLV, and GASL…GLYL. One can recognise a CN hydrolase domain in the interval 230 to 470; sequence IQGNIAQELK…QGILRGEVIP (241 aa). The active-site Proton acceptor is Glu-269. The active site involves Lys-330. Residue Cys-382 is the Nucleophile of the active site. Residues 482–502 form a helical membrane-spanning segment; it reads VWPLAGLAGVLLLWALLGRQL.

The protein belongs to the CN hydrolase family. Apolipoprotein N-acyltransferase subfamily.

The protein localises to the cell inner membrane. It catalyses the reaction N-terminal S-1,2-diacyl-sn-glyceryl-L-cysteinyl-[lipoprotein] + a glycerophospholipid = N-acyl-S-1,2-diacyl-sn-glyceryl-L-cysteinyl-[lipoprotein] + a 2-acyl-sn-glycero-3-phospholipid + H(+). The protein operates within protein modification; lipoprotein biosynthesis (N-acyl transfer). Its function is as follows. Catalyzes the phospholipid dependent N-acylation of the N-terminal cysteine of apolipoprotein, the last step in lipoprotein maturation. In Pseudomonas aeruginosa (strain LESB58), this protein is Apolipoprotein N-acyltransferase.